Here is a 543-residue protein sequence, read N- to C-terminus: Plant intracellular Ras-group-related LRR protein 5 (543 aa).

LRR repeat units lie at residues 239-262 (LQDV…IGSL), 264-284 (YLTK…AFGE), 285-307 (LSNL…SFGN), 309-331 (TSLA…LGKL), 332-354 (ANLR…IGSC), 356-377 (SLVE…IGKL), 378-400 (EKLE…VGSL), 402-424 (RLRE…CFAT), 426-448 (LVKL…IGNL), and 449-470 (EMLE…SFRC). One copy of the LRR 11; degenerate repeat lies at 472-494 (SRLRVFHADETPLEFPPREVVKL). A GVYW; degenerate motif is present at residues 495 to 502 (GAQAVVKY).

Belongs to the SHOC2 family. As to expression, widely expressed.

In terms of biological role, leucine-rich repeat protein that likely mediates protein interactions, possibly in the context of signal transduction. This Oryza sativa subsp. japonica (Rice) protein is Plant intracellular Ras-group-related LRR protein 5 (IRL5).